The primary structure comprises 159 residues: Transcription elongation factor GreA (159 aa).

A coiled-coil region spans residues 47–77 (SENAEYDAARDKQATIENEITEIQHILDNYE).

The protein belongs to the GreA/GreB family.

In terms of biological role, necessary for efficient RNA polymerase transcription elongation past template-encoded arresting sites. The arresting sites in DNA have the property of trapping a certain fraction of elongating RNA polymerases that pass through, resulting in locked ternary complexes. Cleavage of the nascent transcript by cleavage factors such as GreA or GreB allows the resumption of elongation from the new 3'terminus. GreA releases sequences of 2 to 3 nucleotides. This Metamycoplasma arthritidis (strain 158L3-1) (Mycoplasma arthritidis) protein is Transcription elongation factor GreA.